Here is a 255-residue protein sequence, read N- to C-terminus: Putative SET domain-containing protein L678 (255 aa).

Residues 5-176 (NRISEVFIKK…TGEELTDNYV (172 aa)) enclose the SET domain. The disordered stretch occupies residues 235-255 (LQQNSKNLKKNPKKTIKATPK).

It belongs to the class V-like SAM-binding methyltransferase superfamily.

This Acanthamoeba polyphaga mimivirus (APMV) protein is Putative SET domain-containing protein L678.